The primary structure comprises 261 residues: Carnitinyl-CoA dehydratase (261 aa).

The active-site Nucleophile is the E111. The active-site Proton acceptor is E131.

This sequence belongs to the enoyl-CoA hydratase/isomerase family.

The catalysed reaction is (R)-carnitinyl-CoA = crotonobetainyl-CoA + H2O. It functions in the pathway amine and polyamine metabolism; carnitine metabolism. Its function is as follows. Catalyzes the reversible dehydration of L-carnitinyl-CoA to crotonobetainyl-CoA. This chain is Carnitinyl-CoA dehydratase, found in Escherichia coli (strain ATCC 8739 / DSM 1576 / NBRC 3972 / NCIMB 8545 / WDCM 00012 / Crooks).